The sequence spans 217 residues: Zinc finger CCHC-type and RNA-binding motif-containing protein 1 (217 aa).

The region spanning serine 10–aspartate 88 is the RRM domain. A CCHC-type zinc finger spans residues serine 105–lysine 122. The segment at cysteine 120–aspartate 217 is disordered. Positions proline 145 to alanine 163 are enriched in acidic residues. 3 positions are modified to phosphoserine: serine 155, serine 210, and serine 216.

In terms of assembly, component of the U11/U12 snRNPs that are part of the U12-type spliceosome. Interacts with ZRSR1.

It localises to the nucleus. The protein resides in the nucleoplasm. This is Zinc finger CCHC-type and RNA-binding motif-containing protein 1 (ZCRB1) from Bos taurus (Bovine).